Here is a 248-residue protein sequence, read N- to C-terminus: Protein maestro (248 aa).

The disordered stretch occupies residues 1–21; sequence MDQRQRRILGQPLSIPTSQPK. Residues 128–163 form an HEAT repeat; sequence SFFIDITLQTRTLLDDENDSLRYSAFVLFGQLAAFA.

In terms of tissue distribution, ubiquitous.

It is found in the nucleus. The protein localises to the nucleolus. This chain is Protein maestro (MRO), found in Homo sapiens (Human).